Consider the following 509-residue polypeptide: Cobyric acid synthase (509 aa).

A GATase cobBQ-type domain is found at 262-459; it reads EIKVGIIKLP…IHGIFENDSW (198 aa). Residue cysteine 343 is the Nucleophile of the active site. Residue histidine 451 is part of the active site.

This sequence belongs to the CobB/CobQ family. CobQ subfamily.

Its pathway is cofactor biosynthesis; adenosylcobalamin biosynthesis. Its function is as follows. Catalyzes amidations at positions B, D, E, and G on adenosylcobyrinic A,C-diamide. NH(2) groups are provided by glutamine, and one molecule of ATP is hydrogenolyzed for each amidation. The protein is Cobyric acid synthase of Prochlorococcus marinus (strain MIT 9301).